A 268-amino-acid chain; its full sequence is Imidazole glycerol phosphate synthase subunit HisF (268 aa).

Catalysis depends on residues Asp12 and Asp131.

The protein belongs to the HisA/HisF family. As to quaternary structure, heterodimer of HisH and HisF.

Its subcellular location is the cytoplasm. It catalyses the reaction 5-[(5-phospho-1-deoxy-D-ribulos-1-ylimino)methylamino]-1-(5-phospho-beta-D-ribosyl)imidazole-4-carboxamide + L-glutamine = D-erythro-1-(imidazol-4-yl)glycerol 3-phosphate + 5-amino-1-(5-phospho-beta-D-ribosyl)imidazole-4-carboxamide + L-glutamate + H(+). It participates in amino-acid biosynthesis; L-histidine biosynthesis; L-histidine from 5-phospho-alpha-D-ribose 1-diphosphate: step 5/9. Its function is as follows. IGPS catalyzes the conversion of PRFAR and glutamine to IGP, AICAR and glutamate. The HisF subunit catalyzes the cyclization activity that produces IGP and AICAR from PRFAR using the ammonia provided by the HisH subunit. In Salinibacter ruber (strain DSM 13855 / M31), this protein is Imidazole glycerol phosphate synthase subunit HisF.